The following is a 374-amino-acid chain: Flagellar P-ring protein (374 aa).

Positions 1 to 29 are cleaved as a signal peptide; sequence MPGVGISRIVRIAVAALVALAPLMTPAHA.

It belongs to the FlgI family. As to quaternary structure, the basal body constitutes a major portion of the flagellar organelle and consists of four rings (L,P,S, and M) mounted on a central rod.

It localises to the periplasm. The protein resides in the bacterial flagellum basal body. Functionally, assembles around the rod to form the L-ring and probably protects the motor/basal body from shearing forces during rotation. The polypeptide is Flagellar P-ring protein (Nitrobacter hamburgensis (strain DSM 10229 / NCIMB 13809 / X14)).